The sequence spans 220 residues: Large ribosomal subunit protein uL3 (220 aa).

The segment at 137–159 (GASHGAHKNHRKPGSIGGASTPS) is disordered.

It belongs to the universal ribosomal protein uL3 family. Part of the 50S ribosomal subunit. Forms a cluster with proteins L14 and L19.

One of the primary rRNA binding proteins, it binds directly near the 3'-end of the 23S rRNA, where it nucleates assembly of the 50S subunit. This is Large ribosomal subunit protein uL3 from Renibacterium salmoninarum (strain ATCC 33209 / DSM 20767 / JCM 11484 / NBRC 15589 / NCIMB 2235).